We begin with the raw amino-acid sequence, 279 residues long: Ribosomal RNA small subunit methyltransferase A (279 aa).

The S-adenosyl-L-methionine site is built by histidine 12, leucine 14, glycine 39, glutamate 60, aspartate 81, and asparagine 118.

This sequence belongs to the class I-like SAM-binding methyltransferase superfamily. rRNA adenine N(6)-methyltransferase family. RsmA subfamily.

The protein resides in the cytoplasm. The catalysed reaction is adenosine(1518)/adenosine(1519) in 16S rRNA + 4 S-adenosyl-L-methionine = N(6)-dimethyladenosine(1518)/N(6)-dimethyladenosine(1519) in 16S rRNA + 4 S-adenosyl-L-homocysteine + 4 H(+). Specifically dimethylates two adjacent adenosines (A1518 and A1519) in the loop of a conserved hairpin near the 3'-end of 16S rRNA in the 30S particle. May play a critical role in biogenesis of 30S subunits. This Polaromonas naphthalenivorans (strain CJ2) protein is Ribosomal RNA small subunit methyltransferase A.